The sequence spans 225 residues: Probable GTP-binding protein EngB (225 aa).

An EngB-type G domain is found at Val-31–Pro-204. Residues Gly-39–Ser-46, Gly-65–Leu-69, Asp-83–Gly-86, Thr-150–Asp-153, and Phe-183–Ser-185 contribute to the GTP site. Residues Ser-46 and Thr-67 each coordinate Mg(2+).

The protein belongs to the TRAFAC class TrmE-Era-EngA-EngB-Septin-like GTPase superfamily. EngB GTPase family. Requires Mg(2+) as cofactor.

Functionally, necessary for normal cell division and for the maintenance of normal septation. The chain is Probable GTP-binding protein EngB from Shewanella pealeana (strain ATCC 700345 / ANG-SQ1).